The following is a 91-amino-acid chain: Acylphosphatase (91 aa).

The region spanning 3–90 (QYRIIVDGRV…EGHHRFSIVY (88 aa)) is the Acylphosphatase-like domain. Residues arginine 18 and asparagine 36 contribute to the active site.

Belongs to the acylphosphatase family.

The catalysed reaction is an acyl phosphate + H2O = a carboxylate + phosphate + H(+). The protein is Acylphosphatase (acyP) of Bacillus subtilis (strain 168).